The primary structure comprises 1200 residues: MDAVNAFNQELFSLMDMKPPISRAKMILITKAAIKAIKLYKHVVQIVEKFIKKCKPEYKVPGLYVIDSIVRQSRHQFGTDKDVFGPRFSKNITATFQYLYLCPSEDKSKIVRVLNLWQKNGVFKIEIIQPLLDMAAGTSNAAPGAENVTNNEGSPPPPVKVSSELPQAPTNSMPAVPQLPSSDAFAAVAQLFQTTQGQQLQQILQTFQQPPKPQSPALDSAVMAQVQAITAQLKTAPTQPPEQKTAFDKKLLDRFDYDDEPEAVEDSKKEDAVAVATTALATAAPPVPAAATPAVAPAVPASSATSPPPPQAPFGYPGDGMQQPAYTQHQNVDQFQPRMMALQQDSMQHQVPLPPNGQMPGFGLLSAPPPFPPMPQPGMPQPGMPQPGMPQPGLSQPGLPQPGMPQPGMPQPGMPQPGMPQPGLPQPGLPQPGMPQPGMPQPGMPQPGMPQPGMPPTPPVQPTFQPTFQPQNEPHSQKPHQQEMEVEQPCVTEVKRHVPESRKSRSRSPKRRRSRSGSRSRRSRHRRSRSRSRDRRRHSPRSRSQERRDREKERERRQKGLPQIKSETASVCSTTLWVGQLDKRTTQQDVASLLEEFGPIESINMIPPRGCAYIVMVHRQDAYRALQKLSRGNYKVNQKSIKIAWALNKGIKADFKQYWDVELGVTYIPWDKVKAEELESFCEGGMLDSDTLNPDWKGIPKKPENEVAQNGGAEASHTEPVSPIPKPVPVPVPALPVPAPITVPPPQVPPHQPGPPVVGALQPPAFTPPLGIPPPGFGPGVPPPPPPPPPFLRPGFNPMHLPPGFLPPGPPPPITPPVSIPPPHTPPISIPNLVSGARGNAESADSAKMYGSAGPPAAPTSLPTPPVTQPVSLLGTQGVAPGPVIGLQAPSTGLLGARPGLIPLQRPPGMPPPHLQRFPMMPPRPMPPHMMHRGPPPGPGGFAMPPPHGMKGPFPPHGPFVRPGGMPGLGGPGPGPGGSEDRDGRQQQPQQQQQQQQQQQQQQQQQQQQPPPQQSQTQQQPAPSQQPAPAQQQPQQFRNDNRQQFNSGRDQERFGRRSFGSRVENDRERYGSRSDERDNSNRERREWGRRSPERDRHRDLEERSRRSSGHRDRDRDSRDRESRREKEESRGKEKHEVADRAGGNKAVEAPLSQVGNTDTVSELNKGEAMATVVKPEESPAEATSSVEPEKDSGSAAEAPR.

A CID domain is found at 1–139; the sequence is MDAVNAFNQE…PLLDMAAGTS (139 aa). K49 is modified (N6-acetyllysine). Over residues 140–153 the composition is skewed to polar residues; sequence NAAPGAENVTNNEG. Disordered stretches follow at residues 140–172, 299–324, and 346–566; these read NAAP…PTNS, VPAS…MQQP, and SMQH…QIKS. Phosphoserine is present on S154. Composition is skewed to pro residues over residues 367-390 and 399-461; these read APPP…PGMP and LPQP…PPVQ. A compositionally biased stretch (low complexity) spans 462-471; sequence PTFQPTFQPQ. Positions 493-503 are enriched in basic and acidic residues; sequence EVKRHVPESRK. The segment covering 504 to 541 has biased composition (basic residues); that stretch reads SRSRSPKRRRSRSGSRSRRSRHRRSRSRSRDRRRHSPR. The segment covering 543–558 has biased composition (basic and acidic residues); it reads RSQERRDREKERERRQ. The 75-residue stretch at 574–648 folds into the RRM domain; that stretch reads TTLWVGQLDK…KSIKIAWALN (75 aa). 3 disordered regions span residues 696–724, 834–875, and 927–1200; these read WKGI…VSPI, VSGA…SLLG, and PPHM…EAPR. S722 bears the Phosphoserine mark. 2 stretches are compositionally biased toward pro residues: residues 856–868 and 927–958; these read PAAP…PPVT and PPHM…PPHG. Gly residues predominate over residues 965–978; it reads GMPGLGGPGPGPGG. Residues 986–1036 are compositionally biased toward low complexity; it reads QQQPQQQQQQQQQQQQQQQQQQQQPPPQQSQTQQQPAPSQQPAPAQQQPQQ. Position 1058 is a phosphoserine (S1058). The span at 1063-1139 shows a compositional bias: basic and acidic residues; sequence VENDRERYGS…RGKEKHEVAD (77 aa). Residues 1153-1162 are compositionally biased toward polar residues; sequence QVGNTDTVSE. Position 1178 is a phosphoserine (S1178).

In terms of assembly, interacts with POLR2A; via C-terminal heptapeptide repeat domain (CTD) phosphorylated at 'Ser-2' and 'Ser-5'.

The protein resides in the nucleus. In terms of biological role, anti-terminator protein required to prevent early mRNA termination during transcription. Together with SCAF8, acts by suppressing the use of early, alternative poly(A) sites, thereby preventing the accumulation of non-functional truncated proteins. Mechanistically, associates with the phosphorylated C-terminal heptapeptide repeat domain (CTD) of the largest RNA polymerase II subunit (POLR2A), and subsequently binds nascent RNA upstream of early polyadenylation sites to prevent premature mRNA transcript cleavage and polyadenylation. Independently of SCAF8, also acts as a suppressor of transcriptional readthrough. The chain is SR-related and CTD-associated factor 4 from Rattus norvegicus (Rat).